Reading from the N-terminus, the 529-residue chain is GTPase Obg (529 aa).

Positions 2–159 constitute an Obg domain; that stretch reads ASFVDRVVLH…SDIVLELKSI (158 aa). One can recognise an OBG-type G domain in the interval 160–343; the sequence is ADIALVGFPS…LGFAMAEIVK (184 aa). GTP-binding positions include 166 to 173, 191 to 195, 212 to 215, 295 to 298, and 324 to 326; these read GFPSAGKS, FTTLI, DVPG, NKVD, and SAT. Positions 173 and 193 each coordinate Mg(2+). An OCT domain is found at 363–447; it reads PRAVNEAGFK…DDGVVFDWEP (85 aa). Residues 466–502 are compositionally biased toward basic and acidic residues; the sequence is FADIGDRPTRGQKRDEQQERRDAKAAARAELEAERKA. The interval 466-529 is disordered; the sequence is FADIGDRPTR…ESGLTTENEE (64 aa).

The protein belongs to the TRAFAC class OBG-HflX-like GTPase superfamily. OBG GTPase family. Monomer. The cofactor is Mg(2+).

Its subcellular location is the cytoplasm. Its function is as follows. An essential GTPase which binds GTP, GDP and possibly (p)ppGpp with moderate affinity, with high nucleotide exchange rates and a fairly low GTP hydrolysis rate. Plays a role in control of the cell cycle, stress response, ribosome biogenesis and in those bacteria that undergo differentiation, in morphogenesis control. The sequence is that of GTPase Obg from Arthrobacter sp. (strain FB24).